The sequence spans 371 residues: Glycosyltransferase 8 domain-containing protein 1 (371 aa).

Residues M1 to K5 lie on the Cytoplasmic side of the membrane. A helical; Signal-anchor for type II membrane protein transmembrane segment spans residues V6–F26. Residues L27 to K371 lie on the Lumenal side of the membrane. N-linked (GlcNAc...) asparagine glycosylation is present at N257.

Belongs to the glycosyltransferase 8 family.

It is found in the membrane. In Rattus norvegicus (Rat), this protein is Glycosyltransferase 8 domain-containing protein 1 (Glt8d1).